We begin with the raw amino-acid sequence, 303 residues long: Elongation factor Ts (303 aa).

Positions 82–85 (TDFV) are involved in Mg(2+) ion dislocation from EF-Tu.

The protein belongs to the EF-Ts family.

The protein resides in the cytoplasm. Associates with the EF-Tu.GDP complex and induces the exchange of GDP to GTP. It remains bound to the aminoacyl-tRNA.EF-Tu.GTP complex up to the GTP hydrolysis stage on the ribosome. This Clostridioides difficile (strain 630) (Peptoclostridium difficile) protein is Elongation factor Ts.